A 123-amino-acid chain; its full sequence is Small ribosomal subunit protein uS13 (123 aa).

Positions 94–123 (RRGLPVRGQHTKNNARTRKGPARAIAGKKK) are disordered.

This sequence belongs to the universal ribosomal protein uS13 family. In terms of assembly, part of the 30S ribosomal subunit. Forms a loose heterodimer with protein S19. Forms two bridges to the 50S subunit in the 70S ribosome.

In terms of biological role, located at the top of the head of the 30S subunit, it contacts several helices of the 16S rRNA. In the 70S ribosome it contacts the 23S rRNA (bridge B1a) and protein L5 of the 50S subunit (bridge B1b), connecting the 2 subunits; these bridges are implicated in subunit movement. Contacts the tRNAs in the A and P-sites. This Oenococcus oeni (strain ATCC BAA-331 / PSU-1) protein is Small ribosomal subunit protein uS13.